Consider the following 101-residue polypeptide: uncharacterized protein (101 aa).

3 helical membrane passes run 20–40 (KHFI…LLGL), 59–79 (GVIA…MYIA), and 81–101 (SEMW…ALFF).

It localises to the endoplasmic reticulum. It is found in the membrane. This is an uncharacterized protein from Saccharomyces cerevisiae (strain ATCC 204508 / S288c) (Baker's yeast).